We begin with the raw amino-acid sequence, 150 residues long: Deoxyuridine 5'-triphosphate nucleotidohydrolase (150 aa).

Substrate contacts are provided by residues 69-71 (RSG), Asn-82, 86-88 (LID), and Lys-96.

It belongs to the dUTPase family. It depends on Mg(2+) as a cofactor.

It carries out the reaction dUTP + H2O = dUMP + diphosphate + H(+). It functions in the pathway pyrimidine metabolism; dUMP biosynthesis; dUMP from dCTP (dUTP route): step 2/2. In terms of biological role, this enzyme is involved in nucleotide metabolism: it produces dUMP, the immediate precursor of thymidine nucleotides and it decreases the intracellular concentration of dUTP so that uracil cannot be incorporated into DNA. The sequence is that of Deoxyuridine 5'-triphosphate nucleotidohydrolase from Neisseria meningitidis serogroup B (strain ATCC BAA-335 / MC58).